The following is a 244-amino-acid chain: Derlin-2.1 (244 aa).

The Cytoplasmic segment spans residues 1–21; that stretch reads MAQAVEEWYKQMPIITRSYLT. Residues 22-42 form a helical membrane-spanning segment; that stretch reads AAVVTTVGCSLEIISPYNLYL. Topologically, residues 43–96 are lumenal; it reads NPTLVVKQYQFWRLVTNFLYFRKMDLDFLFHMFFLARYCKLLEENSFRGKTADF. Residues 97-117 form a helical membrane-spanning segment; that stretch reads LYMLLFGATVLTGIVLIGGMI. The Cytoplasmic portion of the chain corresponds to 118–121; that stretch reads PYLS. A helical membrane pass occupies residues 122–142; the sequence is VSFSKIIFLSNSLTFMMVYVW. The Lumenal segment spans residues 143 to 152; it reads SKQNPYIHMS. A helical membrane pass occupies residues 153–173; that stretch reads FLGLFTFTAAYLPWVLLGFSI. The Cytoplasmic segment spans residues 174–244; that stretch reads LVGASAWGDF…HAPFDEIHQD (71 aa).

This sequence belongs to the derlin family.

It is found in the endoplasmic reticulum membrane. May be involved in the degradation process of specific misfolded endoplasmic reticulum (ER) luminal proteins. The sequence is that of Derlin-2.1 (DER2.1) from Arabidopsis thaliana (Mouse-ear cress).